A 186-amino-acid polypeptide reads, in one-letter code: Casparian strip membrane protein 5 (186 aa).

At 1–23 (MEHGEISSKAPLVAPVAAGVNRA) the chain is on the cytoplasmic side. A helical transmembrane segment spans residues 24-44 (VAVVDTFLRFIAIIGTIGSAI). Residues 45–73 (AMGTTNETLPFFTQFIQFEAKYSDLPSFT) lie on the Extracellular side of the membrane. An N-linked (GlcNAc...) asparagine glycan is attached at Asn50. Residues 74–94 (FFVAANAVVCTYLVLSIPLSI) form a helical membrane-spanning segment. Over 95-106 (VHILRPRARYSR) the chain is Cytoplasmic. A helical transmembrane segment spans residues 107–127 (LFLVFFDTAMLALLTAGASAA). Over 128–160 (AAIVYLAHKGNVRANWFSICQQFDSFCERISGS) the chain is Extracellular. A helical transmembrane segment spans residues 161 to 181 (LIGSFAAMVLLVVLITLSAFA). At 182–186 (LARRH) the chain is on the cytoplasmic side.

This sequence belongs to the Casparian strip membrane proteins (CASP) family. Homodimer and heterodimers.

It localises to the cell membrane. Regulates membrane-cell wall junctions and localized cell wall deposition. Required for establishment of the Casparian strip membrane domain (CSD) and the subsequent formation of Casparian strips, a cell wall modification of the root endodermis that determines an apoplastic barrier between the intraorganismal apoplasm and the extraorganismal apoplasm and prevents lateral diffusion. This is Casparian strip membrane protein 5 from Oryza sativa subsp. japonica (Rice).